A 316-amino-acid polypeptide reads, in one-letter code: MARRRKGRPIDGVILLDKPTGITSNDTLQKVKRIFFAQKAGHTGALDPLATGMLPICFGEATKFSQFLLDSDKRYRVIAKLGERTNTSDSDGEVVETREVKVDRGQLERCIAKFRGTTDQIPSMFSALKYQGRPLYEYAREGIEIPRESRKITVHSIELLRFEGHEVEMEVHCSKGTYIRTITDDLGEMLGCGAHVVYLRRTGVSDYPMENVVTLEQLQALRDQAIEQGIEPGELLDPLLLPTDSAVQDLPEANVTVEGGDAILHGQPVKASQLPEQGTLVRITVGEQRDFIGIGEIDQNNMVAPKRVMANKQDEA.

Asp-47 acts as the Nucleophile in catalysis.

This sequence belongs to the pseudouridine synthase TruB family. Type 1 subfamily.

The catalysed reaction is uridine(55) in tRNA = pseudouridine(55) in tRNA. In terms of biological role, responsible for synthesis of pseudouridine from uracil-55 in the psi GC loop of transfer RNAs. The polypeptide is tRNA pseudouridine synthase B (Photobacterium profundum (strain SS9)).